Reading from the N-terminus, the 144-residue chain is 3-hydroxyacyl-[acyl-carrier-protein] dehydratase FabZ (144 aa).

His-48 is an active-site residue.

Belongs to the thioester dehydratase family. FabZ subfamily.

It is found in the cytoplasm. It carries out the reaction a (3R)-hydroxyacyl-[ACP] = a (2E)-enoyl-[ACP] + H2O. Functionally, involved in unsaturated fatty acids biosynthesis. Catalyzes the dehydration of short chain beta-hydroxyacyl-ACPs and long chain saturated and unsaturated beta-hydroxyacyl-ACPs. This Listeria welshimeri serovar 6b (strain ATCC 35897 / DSM 20650 / CCUG 15529 / CIP 8149 / NCTC 11857 / SLCC 5334 / V8) protein is 3-hydroxyacyl-[acyl-carrier-protein] dehydratase FabZ.